Here is a 304-residue protein sequence, read N- to C-terminus: Probable casein kinase I homolog ECU03_0910 (304 aa).

The Protein kinase domain maps to 8-304 (IKLVQKIASG…SDSMGDLEIL (297 aa)). ATP is bound by residues 14–22 (IASGAFGDI) and lysine 37. Aspartate 129 acts as the Proton acceptor in catalysis.

The protein belongs to the protein kinase superfamily. CK1 Ser/Thr protein kinase family. Casein kinase I subfamily.

The protein resides in the nucleus. It carries out the reaction L-seryl-[protein] + ATP = O-phospho-L-seryl-[protein] + ADP + H(+). The enzyme catalyses L-threonyl-[protein] + ATP = O-phospho-L-threonyl-[protein] + ADP + H(+). Its function is as follows. Involved in DNA repair. May regulate the activity of protein(s) involved in double strand break repair caused by gamma rays. In Encephalitozoon cuniculi (strain GB-M1) (Microsporidian parasite), this protein is Probable casein kinase I homolog ECU03_0910.